Here is a 209-residue protein sequence, read N- to C-terminus: Orotate phosphoribosyltransferase (209 aa).

Residues Arg96, Lys100, His102, and 122-130 (EDLISTGGS) contribute to the 5-phospho-alpha-D-ribose 1-diphosphate site. Ser126 contacts orotate.

It belongs to the purine/pyrimidine phosphoribosyltransferase family. PyrE subfamily. In terms of assembly, homodimer. The cofactor is Mg(2+).

It carries out the reaction orotidine 5'-phosphate + diphosphate = orotate + 5-phospho-alpha-D-ribose 1-diphosphate. It participates in pyrimidine metabolism; UMP biosynthesis via de novo pathway; UMP from orotate: step 1/2. Its function is as follows. Catalyzes the transfer of a ribosyl phosphate group from 5-phosphoribose 1-diphosphate to orotate, leading to the formation of orotidine monophosphate (OMP). This is Orotate phosphoribosyltransferase from Streptococcus pyogenes serotype M1.